An 831-amino-acid polypeptide reads, in one-letter code: DNA replication licensing factor MCM6 (831 aa).

The C4-type zinc-finger motif lies at 155 to 182; the sequence is CLDCGSVIKNVEQQFKYTQPTICVSPTC. Positions 258–278 are disordered; that stretch reads GERAECRRDSSQQKSSTAGHE. The span at 259 to 268 shows a compositional bias: basic and acidic residues; sequence ERAECRRDSS. The MCM domain maps to 345-551; that stretch reads YFNKLVGSMA…VTDYHIAHHI (207 aa). 395 to 402 contributes to the ATP binding site; it reads GDPSCAKS. An Arginine finger motif is present at residues 527–530; the sequence is SRFD. The interval 666–705 is disordered; the sequence is SEYQDANGDNMDDTDDIENPVDGEEDQQNGAAEPASATAD. Positions 675–692 are enriched in acidic residues; sequence NMDDTDDIENPVDGEEDQ.

The protein belongs to the MCM family. Component of the minichromosome maintenance (MCM) complex, a heterotetramer composed of MCM2, MCM3, MCM4, MCM5, MCM6 and MCM7. Interacts with ETG1. Expressed in shoot apex and flower buds.

The protein resides in the nucleus. It catalyses the reaction ATP + H2O = ADP + phosphate + H(+). Functionally, probable component of the MCM2-7 complex (MCM complex) that may function as a DNA helicase and which is essential to undergo a single round of replication initiation and elongation per cell cycle in eukaryotic cells. In Arabidopsis thaliana (Mouse-ear cress), this protein is DNA replication licensing factor MCM6 (MCM6).